The sequence spans 146 residues: Hemoglobin subunit beta (146 aa).

V1 bears the N-acetylvaline mark. In terms of domain architecture, Globin spans 2-146 (HLTGEEKSAV…VANALAHKYH (145 aa)). T12 is subject to Phosphothreonine. S44 carries the phosphoserine modification. Position 59 is an N6-acetyllysine (K59). H63 provides a ligand contact to heme b. An N6-acetyllysine modification is found at K82. H92 is a heme b binding site. C93 carries the post-translational modification S-nitrosocysteine. Position 144 is an N6-acetyllysine (K144).

Belongs to the globin family. Heterotetramer of two alpha chains and two beta chains. As to expression, red blood cells.

Involved in oxygen transport from the lung to the various peripheral tissues. The protein is Hemoglobin subunit beta (HBB) of Saguinus mystax (Moustached tamarin).